The primary structure comprises 216 residues: MQIDISTLDAGSAGKAELPEEYFAATPRADIMARVVHWQLAKRRAGTHKVKGMGEVSGTTKKPYRQKGTGNARQGSLRAPQFRTGGAVHGPVVRDHGYSLNKKVRRLGLISALSQKLAEGKLVVLDTVAGVSKTSELNVKLKKLGWGRTLVVDAVVDEGFARASRNLIGIDVLPVVGANVYDILQHDTLAITAAGLEGLKRRLDGIKAGANEEIAA.

Positions 47–77 (THKVKGMGEVSGTTKKPYRQKGTGNARQGSL) are disordered.

The protein belongs to the universal ribosomal protein uL4 family. As to quaternary structure, part of the 50S ribosomal subunit.

One of the primary rRNA binding proteins, this protein initially binds near the 5'-end of the 23S rRNA. It is important during the early stages of 50S assembly. It makes multiple contacts with different domains of the 23S rRNA in the assembled 50S subunit and ribosome. In terms of biological role, forms part of the polypeptide exit tunnel. The sequence is that of Large ribosomal subunit protein uL4 from Acidiphilium cryptum (strain JF-5).